The sequence spans 130 residues: Small ribosomal subunit protein uS8 (130 aa).

Belongs to the universal ribosomal protein uS8 family. Part of the 30S ribosomal subunit. Contacts proteins S5 and S12.

Functionally, one of the primary rRNA binding proteins, it binds directly to 16S rRNA central domain where it helps coordinate assembly of the platform of the 30S subunit. The polypeptide is Small ribosomal subunit protein uS8 (Ectopseudomonas mendocina (strain ymp) (Pseudomonas mendocina)).